Reading from the N-terminus, the 473-residue chain is Ribulose bisphosphate carboxylase large chain (473 aa).

Residues Asn116 and Thr166 each coordinate substrate. Catalysis depends on Lys168, which acts as the Proton acceptor. Lys170 provides a ligand contact to substrate. Residues Lys194, Asp196, and Glu197 each coordinate Mg(2+). An N6-carboxylysine modification is found at Lys194. The active-site Proton acceptor is the His287. Arg288, His320, and Ser372 together coordinate substrate.

Belongs to the RuBisCO large chain family. Type I subfamily. Heterohexadecamer of 8 large chains and 8 small chains. It depends on Mg(2+) as a cofactor.

The catalysed reaction is 2 (2R)-3-phosphoglycerate + 2 H(+) = D-ribulose 1,5-bisphosphate + CO2 + H2O. The enzyme catalyses D-ribulose 1,5-bisphosphate + O2 = 2-phosphoglycolate + (2R)-3-phosphoglycerate + 2 H(+). RuBisCO catalyzes two reactions: the carboxylation of D-ribulose 1,5-bisphosphate, the primary event in carbon dioxide fixation, as well as the oxidative fragmentation of the pentose substrate. Both reactions occur simultaneously and in competition at the same active site. This is Ribulose bisphosphate carboxylase large chain from Hydrogenophaga pseudoflava (Pseudomonas carboxydoflava).